The chain runs to 91 residues: Small ribosomal subunit protein bS16 (91 aa).

It belongs to the bacterial ribosomal protein bS16 family.

The polypeptide is Small ribosomal subunit protein bS16 (Ligilactobacillus salivarius (strain UCC118) (Lactobacillus salivarius)).